A 138-amino-acid polypeptide reads, in one-letter code: Enhancer of split malpha protein (138 aa).

It belongs to the M4-like protein family.

Part of the Notch signaling pathway. This Drosophila melanogaster (Fruit fly) protein is Enhancer of split malpha protein.